A 317-amino-acid polypeptide reads, in one-letter code: Thymidylate synthase (317 aa).

DUMP-binding positions include R24 and 179 to 180 (RR). The active-site Nucleophile is C199. DUMP is bound by residues 219–222 (RSAD), N230, and 260–262 (HIY). Position 222 (D222) interacts with (6R)-5,10-methylene-5,6,7,8-tetrahydrofolate. A316 is a (6R)-5,10-methylene-5,6,7,8-tetrahydrofolate binding site.

This sequence belongs to the thymidylate synthase family. Bacterial-type ThyA subfamily. Homodimer.

It localises to the cytoplasm. It carries out the reaction dUMP + (6R)-5,10-methylene-5,6,7,8-tetrahydrofolate = 7,8-dihydrofolate + dTMP. The protein operates within pyrimidine metabolism; dTTP biosynthesis. Catalyzes the reductive methylation of 2'-deoxyuridine-5'-monophosphate (dUMP) to 2'-deoxythymidine-5'-monophosphate (dTMP) while utilizing 5,10-methylenetetrahydrofolate (mTHF) as the methyl donor and reductant in the reaction, yielding dihydrofolate (DHF) as a by-product. This enzymatic reaction provides an intracellular de novo source of dTMP, an essential precursor for DNA biosynthesis. This Oceanobacillus iheyensis (strain DSM 14371 / CIP 107618 / JCM 11309 / KCTC 3954 / HTE831) protein is Thymidylate synthase.